The following is a 378-amino-acid chain: Odorant receptor 33a (378 aa).

The Cytoplasmic segment spans residues 1 to 33 (MDSRRKVRSENLYKTYWLYWRLLGVEGDYPFRR). The chain crosses the membrane as a helical span at residues 34-54 (LVDFTITSFITILFPVHLILG). At 55-62 (MYKKPQIQ) the chain is on the extracellular side. The helical transmembrane segment at 63–83 (VFRSLHFTSECLFCSYKFFCF) threads the bilayer. Over 84 to 127 (RWKLKEIKTIEGLLQDLDSRVESEEERNYFNQNPSRVARMLSKS) the chain is Cytoplasmic. A helical membrane pass occupies residues 128–148 (YLVAAISAIITATVAGLFSTG). Topologically, residues 149–163 (RNLMYLGWFPYDFQA) are extracellular. A helical membrane pass occupies residues 164 to 184 (TAAIYWISFSYQAIGSSLLIL). The Cytoplasmic portion of the chain corresponds to 185 to 254 (ENLANDSYPP…LLRSTLHLSQ (70 aa)). A helical transmembrane segment spans residues 255 to 275 (LGQFLSSGINISITLINILFF). Residues 276-285 (AENNFAMLYY) lie on the Extracellular side of the membrane. Residues 286–306 (AVFFAAMLIELFPSCYYGILM) traverse the membrane as a helical segment. At 307 to 355 (TMEFDKLPYAIFSSNWLKMDKRYNRSLIILMQLTLVPVNIKAGGIVGID) the chain is on the cytoplasmic side. Residues 356-376 (MSAFFATVRMAYSFYTLALSF) traverse the membrane as a helical segment. Topologically, residues 377-378 (RV) are extracellular.

The protein belongs to the insect chemoreceptor superfamily. Heteromeric odorant receptor channel (TC 1.A.69) family. Or2a subfamily. As to quaternary structure, interacts with Orco. Complexes exist early in the endomembrane system in olfactory sensory neurons (OSNs), coupling these complexes to the conserved ciliary trafficking pathway. Expressed in 1-2 cells on the distal edge of the antenna but not the maxillary palp.

It is found in the cell membrane. In terms of biological role, odorant receptor which mediates acceptance or avoidance behavior, depending on its substrates. The odorant receptor repertoire encodes a large collection of odor stimuli that vary widely in identity, intensity, and duration. May form a complex with Orco to form odorant-sensing units, providing sensitive and prolonged odorant signaling and calcium permeability. This is Odorant receptor 33a (Or33a) from Drosophila melanogaster (Fruit fly).